The sequence spans 439 residues: Beta-1,3-galactosyl-O-glycosyl-glycoprotein beta-1,6-N-acetylglucosaminyltransferase (439 aa).

At M1 to R11 the chain is on the cytoplasmic side. A helical; Signal-anchor for type II membrane protein membrane pass occupies residues G12–L29. Topologically, residues R30 to L439 are lumenal. N-linked (GlcNAc...) asparagine; by host glycans are attached at residues N71 and N107. 4 cysteine pairs are disulfide-bonded: C72–C229, C163–C383, C184–C211, and C392–C424.

The protein belongs to the glycosyltransferase 14 family.

The protein resides in the host Golgi apparatus membrane. It carries out the reaction a 3-O-[beta-D-galactosyl-(1-&gt;3)-N-acetyl-alpha-D-galactosaminyl]-L-seryl-[protein] + UDP-N-acetyl-alpha-D-glucosamine = 3-O-{beta-D-galactosyl-(1-&gt;3)-[N-acetyl-beta-D-glucosaminyl-(1-&gt;6)]-N-acetyl-alpha-D-galactosaminyl}-L-seryl-[protein] + UDP + H(+). The enzyme catalyses a 3-O-[beta-D-galactosyl-(1-&gt;3)-N-acetyl-alpha-D-galactosaminyl]-L-threonyl-[protein] + UDP-N-acetyl-alpha-D-glucosamine = a 3-O-{beta-D-galactosyl-(1-&gt;3)-[N-acetyl-beta-D-glucosaminyl-(1-&gt;6)]-N-acetyl-alpha-D-galactosaminyl}-L-threonyl-[protein] + UDP + H(+). The catalysed reaction is a beta-D-Gal-(1-&gt;4)-beta-D-GlcNAc-(1-&gt;3)-beta-D-Gal-(1-&gt;4)-beta-D-GlcNAc derivative + UDP-N-acetyl-alpha-D-glucosamine = a beta-D-Gal-(1-&gt;4)-beta-D-GlcNAc-(1-&gt;3)-[beta-D-GlcNAc-(1-&gt;6)]-beta-D-Gal-(1-&gt;4)-N-acetyl-beta-D-glucosaminyl derivative + UDP + H(+). It catalyses the reaction 3-O-[N-acetyl-beta-D-glucosaminyl-(1-&gt;3)-N-acetyl-alpha-D-galactosaminyl]-L-seryl-[protein] + UDP-N-acetyl-alpha-D-glucosamine = 3-O-[N-acetyl-beta-D-glucosaminyl-(1-&gt;3)-[N-acetyl-beta-D-glucosaminyl-(1-&gt;6)]-N-acetyl-alpha-D-galactosaminyl]-L-seryl-[protein] + UDP + H(+). It carries out the reaction a 3-O-[N-acetyl-beta-D-glucosaminyl-(1-&gt;3)-N-acetyl-alpha-D-galactosaminyl]-L-threonyl-[protein] + UDP-N-acetyl-alpha-D-glucosamine = 3-O-[N-acetyl-beta-D-glucosaminyl-(1-&gt;3)-[N-acetyl-beta-D-glucosaminyl-(1-&gt;6)]-N-acetyl-alpha-D-galactosaminyl]-L-threonyl-[protein] + UDP + H(+). It functions in the pathway protein modification; protein glycosylation. Functionally, non-essential glycosyltransferase that can synthesize all known mucin beta 6 N-acetylglucosaminides. Mediates core 2 and core 4 O-glycan branching, 2 important steps in mucin-type biosynthesis. Has also I-branching enzyme activity by converting linear into branched poly-N-acetyllactosaminoglycans. Contributes to the post-translational modifications of structural proteins. This chain is Beta-1,3-galactosyl-O-glycosyl-glycoprotein beta-1,6-N-acetylglucosaminyltransferase (Bo17), found in Bovine herpesvirus 4 (BoHV-4).